A 95-amino-acid chain; its full sequence is Small ribosomal subunit protein bS6 (95 aa).

The protein belongs to the bacterial ribosomal protein bS6 family.

Functionally, binds together with bS18 to 16S ribosomal RNA. The polypeptide is Small ribosomal subunit protein bS6 (Bacillus velezensis (strain DSM 23117 / BGSC 10A6 / LMG 26770 / FZB42) (Bacillus amyloliquefaciens subsp. plantarum)).